A 197-amino-acid chain; its full sequence is dTTP/UTP pyrophosphatase (197 aa).

D70 acts as the Proton acceptor in catalysis.

This sequence belongs to the Maf family. YhdE subfamily. A divalent metal cation serves as cofactor.

It localises to the cytoplasm. The enzyme catalyses dTTP + H2O = dTMP + diphosphate + H(+). It catalyses the reaction UTP + H2O = UMP + diphosphate + H(+). Nucleoside triphosphate pyrophosphatase that hydrolyzes dTTP and UTP. May have a dual role in cell division arrest and in preventing the incorporation of modified nucleotides into cellular nucleic acids. This chain is dTTP/UTP pyrophosphatase, found in Methanosarcina barkeri (strain Fusaro / DSM 804).